Consider the following 162-residue polypeptide: Protein-export protein SecB (162 aa).

It belongs to the SecB family. In terms of assembly, homotetramer, a dimer of dimers. One homotetramer interacts with 1 SecA dimer.

Its subcellular location is the cytoplasm. Functionally, one of the proteins required for the normal export of preproteins out of the cell cytoplasm. It is a molecular chaperone that binds to a subset of precursor proteins, maintaining them in a translocation-competent state. It also specifically binds to its receptor SecA. This is Protein-export protein SecB from Bradyrhizobium sp. (strain BTAi1 / ATCC BAA-1182).